Reading from the N-terminus, the 207-residue chain is Small ribosomal subunit protein uS4 (207 aa).

The region spanning 98–164 (RRLDNVVYRM…AKFKNLVEVN (67 aa)) is the S4 RNA-binding domain.

This sequence belongs to the universal ribosomal protein uS4 family. Part of the 30S ribosomal subunit. Contacts protein S5. The interaction surface between S4 and S5 is involved in control of translational fidelity.

Functionally, one of the primary rRNA binding proteins, it binds directly to 16S rRNA where it nucleates assembly of the body of the 30S subunit. Its function is as follows. With S5 and S12 plays an important role in translational accuracy. This Clostridioides difficile (strain 630) (Peptoclostridium difficile) protein is Small ribosomal subunit protein uS4.